A 320-amino-acid chain; its full sequence is Eukaryotic translation initiation factor 3 subunit G (320 aa).

The disordered stretch occupies residues 1-25; the sequence is MPTGDFDSKPSWADQVEEEGEDDKC. Phosphoserine is present on residues Ser-8 and Ser-11. A phosphothreonine mark is found at Thr-38 and Thr-41. Phosphoserine is present on residues Ser-42, Ser-189, Ser-223, and Ser-264. The interval 209 to 234 is disordered; sequence KTGKYVPPSLRDGASRRGESMQPNRR. Basic and acidic residues predominate over residues 221-234; sequence GASRRGESMQPNRR. The 79-residue stretch at 239 to 317 folds into the RRM domain; it reads ATIRVTNLSE…LILNVEWAKP (79 aa).

Belongs to the eIF-3 subunit G family. In terms of assembly, component of the eukaryotic translation initiation factor 3 (eIF-3) complex, which is composed of 13 subunits: EIF3A, EIF3B, EIF3C, EIF3D, EIF3E, EIF3F, EIF3G, EIF3H, EIF3I, EIF3J, EIF3K, EIF3L and EIF3M. The eIF-3 complex appears to include 3 stable modules: module A is composed of EIF3A, EIF3B, EIF3G and EIF3I; module B is composed of EIF3F, EIF3H, and EIF3M; and module C is composed of EIF3C, EIF3D, EIF3E, EIF3K and EIF3L. EIF3C of module C binds EIF3B of module A and EIF3H of module B, thereby linking the three modules. EIF3J is a labile subunit that binds to the eIF-3 complex via EIF3B. The eIF-3 complex interacts with RPS6KB1 under conditions of nutrient depletion. Mitogenic stimulation leads to binding and activation of a complex composed of FRAP1 and RAPTOR, leading to phosphorylation and release of RPS6KB1 and binding of EIF4B to eIF-3. Interacts (via C-terminus) with AIFM1 (via N-terminus). Interacts with DHX33; the interaction is independent of RNA. In terms of processing, phosphorylated. Phosphorylation is enhanced upon serum stimulation.

The protein resides in the cytoplasm. Its subcellular location is the nucleus. The protein localises to the perinuclear region. Its function is as follows. RNA-binding component of the eukaryotic translation initiation factor 3 (eIF-3) complex, which is required for several steps in the initiation of protein synthesis. The eIF-3 complex associates with the 40S ribosome and facilitates the recruitment of eIF-1, eIF-1A, eIF-2:GTP:methionyl-tRNAi and eIF-5 to form the 43S pre-initiation complex (43S PIC). The eIF-3 complex stimulates mRNA recruitment to the 43S PIC and scanning of the mRNA for AUG recognition. The eIF-3 complex is also required for disassembly and recycling of post-termination ribosomal complexes and subsequently prevents premature joining of the 40S and 60S ribosomal subunits prior to initiation. The eIF-3 complex specifically targets and initiates translation of a subset of mRNAs involved in cell proliferation, including cell cycling, differentiation and apoptosis, and uses different modes of RNA stem-loop binding to exert either translational activation or repression. This subunit can bind 18S rRNA. The protein is Eukaryotic translation initiation factor 3 subunit G of Bos taurus (Bovine).